We begin with the raw amino-acid sequence, 318 residues long: Probable mitochondrial 2-oxoglutarate/malate carrier protein (318 aa).

Solcar repeat units follow at residues 22–111 (QSQL…IKDI), 119–210 (LPFT…TKQL), and 219–309 (DDIK…LNIL). Helical transmembrane passes span 28–48 (FVIG…IDSL), 79–99 (GFFT…TYTT), 125–145 (IMVG…ADLT), 185–205 (GCSP…SSYD), 225–245 (LIAS…LDVI), and 281–301 (FYKG…LTFI).

It belongs to the mitochondrial carrier (TC 2.A.29) family.

It is found in the mitochondrion inner membrane. In terms of biological role, mitochondrial solute carriers shuttle metabolites, nucleotides, and cofactors through the mitochondrial inner membrane. Catalyzes the transport of 2-oxoglutarate across the inner mitochondrial membrane in an electroneutral exchange for malate or other dicarboxylic acids, and plays an important role in several metabolic processes, including the malate-aspartate shuttle, the oxoglutarate/isocitrate shuttle, in gluconeogenesis from lactate, and in nitrogen metabolism. The polypeptide is Probable mitochondrial 2-oxoglutarate/malate carrier protein (ucpC) (Dictyostelium discoideum (Social amoeba)).